A 563-amino-acid polypeptide reads, in one-letter code: NAD-dependent malic enzyme (563 aa).

Tyr101 functions as the Proton donor in the catalytic mechanism. Arg154 serves as a coordination point for NAD(+). The Proton acceptor role is filled by Lys172. A divalent metal cation contacts are provided by Glu243, Asp244, and Asp267. Positions 267 and 416 each coordinate NAD(+).

The protein belongs to the malic enzymes family. Homotetramer. Requires Mg(2+) as cofactor. Mn(2+) is required as a cofactor.

The catalysed reaction is (S)-malate + NAD(+) = pyruvate + CO2 + NADH. The enzyme catalyses oxaloacetate + H(+) = pyruvate + CO2. This is NAD-dependent malic enzyme from Pseudomonas syringae pv. syringae (strain B728a).